Consider the following 2664-residue polypeptide: Inositol 1,4,5-trisphosphate-gated calcium channel ITPR3 (2664 aa).

At 1 to 2227 the chain is on the cytoplasmic side; the sequence is MSEMSSFLHI…YVEGASTGVL (2227 aa). 5 consecutive MIR domains span residues 113–173, 174–224, 232–288, 295–372, and 378–434; these read GDVV…LRSN, GDNV…INLF, EEVL…VEVV, GGAG…LDPT, and DSFV…IVSV. Positions 266, 268, 269, and 270 each coordinate 1D-myo-inositol 1,4,5-trisphosphate. Positions 320 to 344 are disordered; sequence NPSYKGDASDPKAAGTGAQGRTGRR. 1D-myo-inositol 1,4,5-trisphosphate contacts are provided by arginine 503, lysine 507, arginine 510, tyrosine 567, arginine 568, and lysine 569. Arginine 743 is a binding site for Ca(2+). A phosphoserine mark is found at serine 909 and serine 927. Positions 1115 and 1118 each coordinate Ca(2+). Disordered regions lie at residues 1124–1158 and 1790–1850; these read KGAS…GEKS and QQET…VGER. Residues 1792–1805 show a composition bias toward polar residues; the sequence is ETKSTVAVNMSDLG. Residues serine 1806, serine 1825, and serine 1827 each carry the phosphoserine modification. Ca(2+) is bound by residues glutamate 1875 and glutamate 1939. ATP-binding residues include alanine 1989, glutamate 2142, and lysine 2145. Residues 2228-2248 traverse the membrane as a helical segment; that stretch reads GSPLISLLFWILICFSIAALF. Topologically, residues 2249 to 2256 are extracellular; it reads TKRYSVRP. A helical membrane pass occupies residues 2257–2277; sequence LIVALILRSIYYLGIGPTLNI. The Cytoplasmic portion of the chain corresponds to 2278–2286; that stretch reads LGALNLTNK. The chain crosses the membrane as a helical span at residues 2287–2304; it reads IVFVVSFVGNRGTFIRGY. The Extracellular segment spans residues 2305–2318; it reads KAMVMDMEFLYHVG. Residues 2319–2339 traverse the membrane as a helical segment; the sequence is YILTSVLGLFAHELFYSILLF. Residues 2340–2361 lie on the Cytoplasmic side of the membrane; it reads DLIYREETLFNVIKSVTRNGRS. Residues 2362-2382 traverse the membrane as a helical segment; sequence ILLTALLALILVYLFSIVGFL. Topologically, residues 2383-2489 are extracellular; it reads FLKDDFILEV…ESLFPARVVY (107 aa). Cysteine 2448 and cysteine 2454 are oxidised to a cystine. A helical membrane pass occupies residues 2490–2510; the sequence is DLLFFFIVIIIVLNLIFGVII. Residues 2511–2664 lie on the Cytoplasmic side of the membrane; the sequence is DTFADLRSEK…FVDVQNCMSR (154 aa). Positions 2531 and 2532 each coordinate ATP. Position 2531 (cysteine 2531) interacts with Zn(2+). 2 residues coordinate Zn(2+): cysteine 2534 and histidine 2551. Residues lysine 2553, histidine 2556, asparagine 2557, and methionine 2558 each contribute to the ATP site. Zn(2+) is bound at residue histidine 2556. Position 2574 (threonine 2574) interacts with Ca(2+). A phosphoserine mark is found at serine 2602 and serine 2663.

The protein belongs to the InsP3 receptor family. Homotetramer. Homodimer. Interacts with TRPC1, TRPC3 and TRPC4. Interacts with TRPV4. Interacts with SIGMAR1. Interacts with PML and AKT1. Interacts with IRAG2 (via coiled-coil domain). Interacts with CABP1. Interacts with TMBIM4/LFG4. Interacts with CEMIP. Interacts with TESPA1. Interacts with TMEM203. Interacts with BOK; regulates ITPR3 expression. Interacts with BCL2L10. Interacts with CHGA and CHGB. Phosphorylated by AKT1 on serine and/or threonine residues.

The protein localises to the endoplasmic reticulum membrane. Its subcellular location is the cytoplasmic vesicle. It is found in the secretory vesicle membrane. The catalysed reaction is Ca(2+)(in) = Ca(2+)(out). Inositol 1,4,5-trisphosphate-gated calcium channel is regulated by cytosolic calcium in a biphasic manner. At low concentrations, cytosolic calcium binds at a high-affinity juxtamembrane domain (JD) calcium binding site, allowing ITPR3 to activate by escaping a low-energy resting state through an ensemble of preactivated states. At high cytosolic calcium concentrations, ITPR3 preferentially enters an inhibited state stabilized by calcium binding at a second, low-affinity cytoplasmic domain (CD) calcium binding site. Inositol 1,4,5-trisphosphate-gated calcium channel that, upon 1D-myo-inositol 1,4,5-trisphosphate binding, transports calcium from the endoplasmic reticulum lumen to cytoplasm, thus releasing the intracellular calcium and therefore participates in cellular calcium ion homeostasis. 1D-myo-inositol 1,4,5-trisphosphate binds to the ligand-free channel without altering its global conformation, yielding the low-energy resting state, then progresses through resting-to preactivated transitions to the higher energy preactivated state, which increases affinity for calcium, promoting binding of the low basal cytosolic calcium at the juxtamembrane domain (JD) site, favoring the transition through the ensemble of high-energy intermediate states along the trajectory to the fully-open activated state. Upon opening, releases calcium in the cytosol where it can bind to the low-affinity cytoplasmic domain (CD) site and stabilizes the inhibited state to terminate calcium release. This chain is Inositol 1,4,5-trisphosphate-gated calcium channel ITPR3, found in Bos taurus (Bovine).